A 378-amino-acid chain; its full sequence is Probable tRNA sulfurtransferase (378 aa).

The THUMP domain maps to 51–153; the sequence is DANLEKLQYV…SDKTYLFSKT (103 aa). ATP-binding positions include 171–172, 196–197, Arg-253, Gly-275, and Gln-284; these read LM and SF.

This sequence belongs to the ThiI family.

It localises to the cytoplasm. It carries out the reaction [ThiI sulfur-carrier protein]-S-sulfanyl-L-cysteine + a uridine in tRNA + 2 reduced [2Fe-2S]-[ferredoxin] + ATP + H(+) = [ThiI sulfur-carrier protein]-L-cysteine + a 4-thiouridine in tRNA + 2 oxidized [2Fe-2S]-[ferredoxin] + AMP + diphosphate. It catalyses the reaction [ThiS sulfur-carrier protein]-C-terminal Gly-Gly-AMP + S-sulfanyl-L-cysteinyl-[cysteine desulfurase] + AH2 = [ThiS sulfur-carrier protein]-C-terminal-Gly-aminoethanethioate + L-cysteinyl-[cysteine desulfurase] + A + AMP + 2 H(+). Its pathway is cofactor biosynthesis; thiamine diphosphate biosynthesis. Functionally, catalyzes the ATP-dependent transfer of a sulfur to tRNA to produce 4-thiouridine in position 8 of tRNAs, which functions as a near-UV photosensor. Also catalyzes the transfer of sulfur to the sulfur carrier protein ThiS, forming ThiS-thiocarboxylate. This is a step in the synthesis of thiazole, in the thiamine biosynthesis pathway. The sulfur is donated as persulfide by IscS. The chain is Probable tRNA sulfurtransferase from Mycoplasmopsis agalactiae (strain NCTC 10123 / CIP 59.7 / PG2) (Mycoplasma agalactiae).